Reading from the N-terminus, the 300-residue chain is Tyrosine recombinase XerC (300 aa).

In terms of domain architecture, Core-binding (CB) spans 2–88 (IQEGKLEQQF…SLRSFYTFLL (87 aa)). Positions 109-294 (RLPKFFYSEE…TKEHLKSTYM (186 aa)) constitute a Tyr recombinase domain. Catalysis depends on residues R150, K174, H246, R249, and H272. The O-(3'-phospho-DNA)-tyrosine intermediate role is filled by Y281.

This sequence belongs to the 'phage' integrase family. XerC subfamily. In terms of assembly, forms a cyclic heterotetrameric complex composed of two molecules of XerC and two molecules of XerD.

It is found in the cytoplasm. Its function is as follows. Site-specific tyrosine recombinase, which acts by catalyzing the cutting and rejoining of the recombining DNA molecules. The XerC-XerD complex is essential to convert dimers of the bacterial chromosome into monomers to permit their segregation at cell division. It also contributes to the segregational stability of plasmids. The protein is Tyrosine recombinase XerC of Listeria monocytogenes serotype 4b (strain F2365).